We begin with the raw amino-acid sequence, 446 residues long: Cytochrome P450 monooxygenase ptmP (446 aa).

A helical membrane pass occupies residues 19–39; that stretch reads VTVIWILMALVLLAYLILPNP. Cysteine 385 provides a ligand contact to heme. Asparagine 430 is a glycosylation site (N-linked (GlcNAc...) asparagine).

Belongs to the cytochrome P450 family. Heme is required as a cofactor.

Its subcellular location is the membrane. It functions in the pathway secondary metabolite biosynthesis. Its function is as follows. Cytochrome P450 monooxygenase; part of the gene cluster that mediates the biosynthesis of the indole diterpenes penitrems. The geranylgeranyl diphosphate (GGPP) synthase ptmG catalyzes the first step in penitrem biosynthesis via conversion of farnesyl pyrophosphate and isopentyl pyrophosphate into geranylgeranyl pyrophosphate (GGPP). Condensation of indole-3-glycerol phosphate with GGPP by the prenyl transferase ptmC then forms 3-geranylgeranylindole (3-GGI). Epoxidation by the FAD-dependent monooxygenase ptmM leads to a epoxidized-GGI that is substrate of the terpene cyclase ptmB for cyclization to yield paspaline. Paspaline is subsequently converted to 13-desoxypaxilline by the cytochrome P450 monooxygenase ptmP, the latter being then converted to paxilline by the cytochrome P450 monooxygenase ptmQ. Paxilline is converted to beta-paxitriol via C-10 ketoreduction by the short-chain dehydrogenase ptmH which can be monoprenylated at the C-20 by the indole diterpene prenyltransferase ptmD. A two-step elimination (acetylation and elimination) process performed by the O-acetyltransferase ptmV and ptmI leads to the production of the prenylated form of penijanthine. The FAD-linked oxidoreductase ptmO then converts the prenylated form of penijanthine into PC-M5 which is in turn transformed into PC-M4 by the aromatic dimethylallyltransferase ptmE. Five sequential oxidative transformations performed by the cytochrome P450 monooxygenases ptmK, ptmU, ptmL, ptmN and ptmJ yield the various penitrem compounds. PtmK, ptmU and ptmM are involved in the formation of the key bicyclic ring of penitrem C via the formation of the intermediates secopenitrem D and penitrem D. PtmL catalyzes the epoxidation of penitrem D and C to yield penitrem B and F, respectively. PtmJ catalyzes the last benzylic hydroxylation to convert penitrem B to prenitrem E and penitrem F to penitrem A. This is Cytochrome P450 monooxygenase ptmP from Penicillium ochrochloron.